A 174-amino-acid chain; its full sequence is Crossover junction endodeoxyribonuclease RuvC (174 aa).

Active-site residues include Asp8, Glu67, and Asp139. Residues Asp8, Glu67, and Asp139 each coordinate Mg(2+).

It belongs to the RuvC family. As to quaternary structure, homodimer which binds Holliday junction (HJ) DNA. The HJ becomes 2-fold symmetrical on binding to RuvC with unstacked arms; it has a different conformation from HJ DNA in complex with RuvA. In the full resolvosome a probable DNA-RuvA(4)-RuvB(12)-RuvC(2) complex forms which resolves the HJ. Mg(2+) serves as cofactor.

It is found in the cytoplasm. It catalyses the reaction Endonucleolytic cleavage at a junction such as a reciprocal single-stranded crossover between two homologous DNA duplexes (Holliday junction).. Its function is as follows. The RuvA-RuvB-RuvC complex processes Holliday junction (HJ) DNA during genetic recombination and DNA repair. Endonuclease that resolves HJ intermediates. Cleaves cruciform DNA by making single-stranded nicks across the HJ at symmetrical positions within the homologous arms, yielding a 5'-phosphate and a 3'-hydroxyl group; requires a central core of homology in the junction. The consensus cleavage sequence is 5'-(A/T)TT(C/G)-3'. Cleavage occurs on the 3'-side of the TT dinucleotide at the point of strand exchange. HJ branch migration catalyzed by RuvA-RuvB allows RuvC to scan DNA until it finds its consensus sequence, where it cleaves and resolves the cruciform DNA. This is Crossover junction endodeoxyribonuclease RuvC from Pseudomonas entomophila (strain L48).